We begin with the raw amino-acid sequence, 416 residues long: Advanced glycosylation end product-specific receptor (416 aa).

The N-terminal stretch at methionine 1–glycine 22 is a signal peptide. An Ig-like V-type domain is found at aspartate 23 to arginine 115. The Extracellular portion of the chain corresponds to aspartate 23–alanine 352. Asparagine 25 and asparagine 80 each carry an N-linked (GlcNAc...) asparagine glycan. 2 disulfides stabilise this stretch: cysteine 38–cysteine 98 and cysteine 143–cysteine 207. Ig-like C2-type domains are found at residues proline 123–histidine 220 and proline 238–serine 327. Residues leucine 353–tryptophan 373 traverse the membrane as a helical segment. At histidine 374–proline 416 the chain is on the cytoplasmic side. The disordered stretch occupies residues arginine 377–proline 416. The span at asparagine 389–alanine 408 shows a compositional bias: acidic residues.

As to quaternary structure, constitutive homodimer; disulfide-linked. Forms homooligomers. Interacts with S100A1 and APP. Interacts with S100B, S100A12 and S100A14. Interacts with TIRAP. Interacts with HMGB1. Interacts with LGP2; this interaction plays an important role in AGER-mediated pro-inflammatory responses and cytokine release. Interacts with double-strand break repair protein MRE11 which is a core component of the MRN complex; the interaction enhances MRE11 endonuclease activity and promotes DNA repair. Interacts with the MCM2-7 complex via interaction with complex member MCM2; the interaction is increased following DNA replication stress and stabilizes the MCM2-7 complex at replication forks. In terms of processing, phosphorylated on its cytoplasmic domain by PKCzeta/PRKCZ upon ligand binding. Phosphorylated by ATM following DNA damage. Targeted by the ubiquitin E3 ligase subunit FBXO10 to mediate its ubiquitination and degradation. Endothelial cells.

Its subcellular location is the cell membrane. The protein resides in the cell projection. It localises to the phagocytic cup. It is found in the early endosome. The protein localises to the nucleus. Its function is as follows. Cell surface pattern recognition receptor that senses endogenous stress signals with a broad ligand repertoire including advanced glycation end products, S100 proteins, high-mobility group box 1 protein/HMGB1, amyloid beta/APP oligomers, nucleic acids, histones, phospholipids and glycosaminoglycans. Advanced glycosylation end products are nonenzymatically glycosylated proteins which accumulate in vascular tissue in aging and at an accelerated rate in diabetes. These ligands accumulate at inflammatory sites during the pathogenesis of various diseases including diabetes, vascular complications, neurodegenerative disorders and cancers, and RAGE transduces their binding into pro-inflammatory responses. Upon ligand binding, uses TIRAP and MYD88 as adapters to transduce the signal ultimately leading to the induction of inflammatory cytokines IL6, IL8 and TNFalpha through activation of NF-kappa-B. Interaction with S100A12 on endothelium, mononuclear phagocytes, and lymphocytes triggers cellular activation, with generation of key pro-inflammatory mediators. Interaction with S100B after myocardial infarction may play a role in myocyte apoptosis by activating ERK1/2 and p53/TP53 signaling. Contributes to the translocation of amyloid-beta peptide (ABPP) across the cell membrane from the extracellular to the intracellular space in cortical neurons. ABPP-initiated RAGE signaling, especially stimulation of p38 mitogen-activated protein kinase (MAPK), has the capacity to drive a transport system delivering ABPP as a complex with RAGE to the intraneuronal space. Participates in endothelial albumin transcytosis together with HMGB1 through the RAGE/SRC/Caveolin-1 pathway, leading to endothelial hyperpermeability. Mediates the loading of HMGB1 in extracellular vesicles (EVs) that shuttle HMGB1 to hepatocytes by transferrin-mediated endocytosis and subsequently promote hepatocyte pyroptosis by activating the NLRP3 inflammasome. Binds to DNA and promotes extracellular hypomethylated DNA (CpG DNA) uptake by cells via the endosomal route to activate inflammatory responses. Mediates phagocytosis by non-professional phagocytes (NPP) and this is enhanced by binding to ligands including RNA, DNA, HMGB1 and histones. Promotes NPP-mediated phagocytosis of Saccharomyces cerevisiae spores by binding to RNA attached to the spore wall. Also promotes NPP-mediated phagocytosis of apoptotic cells. Following DNA damage, recruited to DNA double-strand break sites where it colocalizes with the MRN repair complex via interaction with double-strand break repair protein MRE11. Enhances the endonuclease activity of MRE11, promoting the end resection of damaged DNA. Promotes DNA damage repair in trophoblasts which enhances trophoblast invasion and contributes to placental development and maintenance. Protects cells from DNA replication stress by localizing to damaged replication forks where it stabilizes the MCM2-7 complex and promotes faithful progression of the replication fork. In Bos taurus (Bovine), this protein is Advanced glycosylation end product-specific receptor (AGER).